The chain runs to 232 residues: N-acetyltransferase 8B (232 aa).

Over 1–62 (MPRFEAQKSS…FLLLLGVPLA (62 aa)) the chain is Cytoplasmic. The helical; Signal-anchor for type II membrane protein transmembrane segment at 63–83 (LVLVSGSWILAVICIFFLLLL) threads the bilayer. In terms of domain architecture, N-acetyltransferase spans 79 to 224 (FLLLLLRLLA…WRLVDICFIQ (146 aa)). Over 84 to 232 (LRLLARQPWK…IQLNYSFPSA (149 aa)) the chain is Lumenal. An N6-acetyllysine modification is found at K109.

This sequence belongs to the NAT8 family. Acetylation on Lys-109 modulates enzymatic activity. As to expression, expressed in brain (at protein level).

Its subcellular location is the endoplasmic reticulum-Golgi intermediate compartment membrane. The protein localises to the endoplasmic reticulum membrane. It carries out the reaction L-lysyl-[protein] + acetyl-CoA = N(6)-acetyl-L-lysyl-[protein] + CoA + H(+). Functionally, endoplasmic reticulum (ER)-membrane-bound lysine N-acetyltransferase catalyzing the N6-acetylation of lysine residues in the lumen of the ER in various proteins, including PROM1 and BACE1, using acetyl-CoA as acetyl donor. Thereby, may regulate apoptosis through the acetylation and the regulation of the expression of PROM1. Acetylates and stabilizes BACE1 immature protein, leading to increased steady-state levels in neurons. By acting on BACE1 expression, may regulate amyloid beta-peptide formation. N(6)-lysine acetylation in ER maintains protein homeostasis and regulates reticulophagy. In Mus musculus (Mouse), this protein is N-acetyltransferase 8B.